A 944-amino-acid chain; its full sequence is Trehalose monomycolate exporter MmpL3 (944 aa).

The Cytoplasmic portion of the chain corresponds to 1–13 (MFAWWGRTVYRYR). A helical transmembrane segment spans residues 14–34 (FIVIGVMVALCLGGGVFGLSL). At 35–185 (GKHVTQSGFY…TIATDQRRME (151 aa)) the chain is on the periplasmic side. Residue 40–44 (QSGFY) participates in a 1,2-diacylglycero-3-phosphoethanolamine binding. Residues 186 to 206 (VLALPLVAVVLFFVFGGVIAA) traverse the membrane as a helical segment. Topologically, residues 207–209 (GLP) are cytoplasmic. Residues 210–230 (VMVGGLCIAGALGIMRFLAIF) form a helical membrane-spanning segment. Over 231–235 (GPVHY) the chain is Periplasmic. The helical transmembrane segment at 236–256 (FAQPVVSLIGLGIAIDYGLFI) threads the bilayer. Topologically, residues 257 to 286 (VSRFREEIAEGYDTETAVRRTVITAGRTVT) are cytoplasmic. The helical transmembrane segment at 287–307 (FSAVLIVASAIGLLLFPQGFL) threads the bilayer. The Periplasmic portion of the chain corresponds to 308–314 (KSLTYAT). A helical membrane pass occupies residues 315–335 (IASVMLSAILSITVLPACLGI). Topologically, residues 336 to 396 (LGKHVDALGV…KLVNRVMKRP (61 aa)) are cytoplasmic. A helical transmembrane segment spans residues 397–417 (VLFAAPIVIIMILLIIPVGKL). At 418–562 (SLGGISEKYL…HGLFAKMPLM (145 aa)) the chain is on the periplasmic side. A helical membrane pass occupies residues 563–583 (VVILLTTTIVLMFLAFGSVVL). Residues 584 to 586 (PIK) lie on the Cytoplasmic side of the membrane. The chain crosses the membrane as a helical span at residues 587 to 607 (ATLMSALTLGSTMGILTWIFV). Topologically, residues 608–616 (DGHFSKWLN) are periplasmic. The helical transmembrane segment at 617-637 (FTPTPLTAPVIGLIIALVFGL) threads the bilayer. The Cytoplasmic portion of the chain corresponds to 638 to 672 (STDYEVFLVSRMVEARERGMSTQEAIRIGTAATGR). Residues 673-693 (IITAAALIVAVVAGAFVFSDL) form a helical membrane-spanning segment. Residues 694–698 (VMMKY) are Periplasmic-facing. The chain crosses the membrane as a helical span at residues 699–719 (LAFGLMAALLLDATVVRMFLV). At 720 to 944 (PSVMKLLGDD…QDLLRREGRL (225 aa)) the chain is on the cytoplasmic side. A disordered region spans residues 778-944 (AAGDPRPPHD…QDLLRREGRL (167 aa)). The span at 791-828 (PLAESPRPARSSPASSPELTPALEATAAPAAPSGASTT) shows a compositional bias: low complexity. The span at 829–839 (RMQIGSSTEPP) shows a compositional bias: polar residues. The segment covering 855-866 (STPPPTPTPPSA) has biased composition (pro residues).

This sequence belongs to the resistance-nodulation-cell division (RND) (TC 2.A.6) family. MmpL subfamily. In terms of assembly, monomer. Interacts with TtfA (via N-terminus); active trehalose monomycolate (TMM) biosynthesis is not required for the complex formation.

The protein localises to the cell inner membrane. Its subcellular location is the cell septum. The protein resides in the cell tip. Transports trehalose monomycolate (TMM) to the cell wall. Flips TMM across the inner membrane. Membrane potential is not required for this function. Transports probably phosphatidylethanolamine (PE) as well. Binds specifically both TMM and PE, but not trehalose dimycolate (TDM). Also binds diacylglycerol (DAG) and other phospholipids, including phosphatidylglycerol (PG), phosphatidylinositol (PI), and cardiolipin (CDL). Contributes to membrane potential, cell wall composition, antibiotic susceptibility and fitness. Could also be part of a heme-iron acquisition system. This Mycobacterium tuberculosis (strain CDC 1551 / Oshkosh) protein is Trehalose monomycolate exporter MmpL3 (mmpL3).